We begin with the raw amino-acid sequence, 46 residues long: Endochitinase 2 (46 aa).

It belongs to the glycosyl hydrolase 19 family. Chitinase class I subfamily.

The enzyme catalyses Random endo-hydrolysis of N-acetyl-beta-D-glucosaminide (1-&gt;4)-beta-linkages in chitin and chitodextrins.. Functionally, defense against chitin-containing fungal and bacterial pathogens. This is Endochitinase 2 from Arachis hypogaea (Peanut).